A 403-amino-acid polypeptide reads, in one-letter code: Phosphopentomutase (403 aa).

Mn(2+) is bound by residues aspartate 13, aspartate 298, histidine 303, aspartate 339, histidine 340, and histidine 351.

Belongs to the phosphopentomutase family. Mn(2+) is required as a cofactor.

Its subcellular location is the cytoplasm. The enzyme catalyses 2-deoxy-alpha-D-ribose 1-phosphate = 2-deoxy-D-ribose 5-phosphate. It catalyses the reaction alpha-D-ribose 1-phosphate = D-ribose 5-phosphate. Its pathway is carbohydrate degradation; 2-deoxy-D-ribose 1-phosphate degradation; D-glyceraldehyde 3-phosphate and acetaldehyde from 2-deoxy-alpha-D-ribose 1-phosphate: step 1/2. Its function is as follows. Isomerase that catalyzes the conversion of deoxy-ribose 1-phosphate (dRib-1-P) and ribose 1-phosphate (Rib-1-P) to deoxy-ribose 5-phosphate (dRib-5-P) and ribose 5-phosphate (Rib-5-P), respectively. This Streptococcus pneumoniae (strain Hungary19A-6) protein is Phosphopentomutase.